The primary structure comprises 365 residues: tRNA N6-adenosine threonylcarbamoyltransferase (365 aa).

Fe cation is bound by residues H119 and H123. Substrate contacts are provided by residues 141–145, D174, and G187; that span reads LVSGG. Positions 184–203 are disordered; that stretch reads QPGGPSVEGEARQGDPKRFR. Residues 192 to 201 are compositionally biased toward basic and acidic residues; the sequence is GEARQGDPKR. N289 serves as a coordination point for substrate. D317 contacts Fe cation. The disordered stretch occupies residues 342–365; sequence ARPRWPLDQSSPAMLGSGKKGAKA.

It belongs to the KAE1 / TsaD family. The cofactor is Fe(2+).

The protein localises to the cytoplasm. The catalysed reaction is L-threonylcarbamoyladenylate + adenosine(37) in tRNA = N(6)-L-threonylcarbamoyladenosine(37) in tRNA + AMP + H(+). Required for the formation of a threonylcarbamoyl group on adenosine at position 37 (t(6)A37) in tRNAs that read codons beginning with adenine. Is involved in the transfer of the threonylcarbamoyl moiety of threonylcarbamoyl-AMP (TC-AMP) to the N6 group of A37, together with TsaE and TsaB. TsaD likely plays a direct catalytic role in this reaction. In Ruegeria pomeroyi (strain ATCC 700808 / DSM 15171 / DSS-3) (Silicibacter pomeroyi), this protein is tRNA N6-adenosine threonylcarbamoyltransferase.